The chain runs to 638 residues: Ubiquitin-associated and SH3 domain-containing protein B (638 aa).

Ser9 bears the Phosphoserine mark. Phosphothreonine is present on Thr12. Residues 23 to 65 (TVKHGSALDVLLSMGFPRARAQKALASTGGRSVQAACDWLFSH) enclose the UBA domain. In terms of domain architecture, SH3 spans 243 to 308 (ANHETLQVIY…PENYITKADE (66 aa)). The interval 369–638 (GPQKRCLFVC…FNWRETLLQE (270 aa)) is protein tyrosine phosphatase. Residue Arg379 is part of the active site. Residue His380 is the Tele-phosphohistidine intermediate of the active site. The active site involves His565.

In terms of assembly, homodimer. Interacts with JAK2 (in vitro). Interacts with CBL. Part of a complex containing CBL and activated EGFR. Interacts with ubiquitin and with mono-ubiquitinated proteins. Interacts with ZAP70 (ubiquitinated form). In terms of tissue distribution, detected in splenic T-cells and B-cells, total spleen, skeletal muscle, heart, lung, kidney, thymus, brain and liver (at protein level). Highly expressed in brain. Detected in heart, spleen, lung, liver, kidney and testis.

It is found in the cytoplasm. The protein localises to the nucleus. It carries out the reaction O-phospho-L-tyrosyl-[protein] + H2O = L-tyrosyl-[protein] + phosphate. Functionally, interferes with CBL-mediated down-regulation and degradation of receptor-type tyrosine kinases. Promotes accumulation of activated target receptors, such as T-cell receptors and EGFR, on the cell surface. Exhibits tyrosine phosphatase activity toward several substrates including EGFR, FAK, SYK, and ZAP70. Down-regulates proteins that are dually modified by both protein tyrosine phosphorylation and ubiquitination. This is Ubiquitin-associated and SH3 domain-containing protein B (Ubash3b) from Mus musculus (Mouse).